The chain runs to 185 residues: Protein GrpE (185 aa).

Positions 1–20 (MSQEKKEELQSEAQVTKEET) are enriched in basic and acidic residues. Residues 1–28 (MSQEKKEELQSEAQVTKEETPQANEAAA) are disordered.

The protein belongs to the GrpE family. As to quaternary structure, homodimer.

It is found in the cytoplasm. Functionally, participates actively in the response to hyperosmotic and heat shock by preventing the aggregation of stress-denatured proteins, in association with DnaK and GrpE. It is the nucleotide exchange factor for DnaK and may function as a thermosensor. Unfolded proteins bind initially to DnaJ; upon interaction with the DnaJ-bound protein, DnaK hydrolyzes its bound ATP, resulting in the formation of a stable complex. GrpE releases ADP from DnaK; ATP binding to DnaK triggers the release of the substrate protein, thus completing the reaction cycle. Several rounds of ATP-dependent interactions between DnaJ, DnaK and GrpE are required for fully efficient folding. The polypeptide is Protein GrpE (Sulfurimonas denitrificans (strain ATCC 33889 / DSM 1251) (Thiomicrospira denitrificans (strain ATCC 33889 / DSM 1251))).